The following is an 87-amino-acid chain: Gibberellin-regulated protein 8 (87 aa).

Residues 1–25 form the signal peptide; sequence MKLVVVQFFIISLLLTSSFSVLSSA.

Belongs to the GASA family. Six disulfide bonds may be present. In terms of tissue distribution, expressed in roots and developing seeds.

The protein localises to the secreted. Gibberellin-regulated protein that may function in hormonal controlled steps of development such as seed germination, flowering and seed maturation. This Arabidopsis thaliana (Mouse-ear cress) protein is Gibberellin-regulated protein 8.